We begin with the raw amino-acid sequence, 156 residues long: Low-salt glycan biosynthesis protein Agl8 (156 aa).

Substrate-binding positions include 14 to 15 (RI) and Arg-47. A Nudix hydrolase domain is found at 25 to 156 (ANVPLVSVDL…YVERYLDALD (132 aa)). Gly-60, Glu-80, and Gln-130 together coordinate Mg(2+). Residues 61–82 (GTVFKNETLTDALYRVADEELG) carry the Nudix box motif.

It belongs to the Nudix hydrolase family. Mg(2+) serves as cofactor.

It participates in protein modification; protein glycosylation. Its pathway is cell surface structure biogenesis; S-layer biogenesis. In terms of biological role, nudix hydrolase involved in N-glycan biosynthetic pathway that takes place under low-salt conditions (1.75 M instead of 3.4 M). Participates in the formation of the tetrasaccharide present at 'Asn-532' of S-layer glycoprotein Csg, consisting of a sulfated hexose, 2 hexoses and rhamnose. Mediates attachment of sugar 3 in the tetrasaccharide. This chain is Low-salt glycan biosynthesis protein Agl8 (agl8), found in Haloferax volcanii (strain ATCC 29605 / DSM 3757 / JCM 8879 / NBRC 14742 / NCIMB 2012 / VKM B-1768 / DS2) (Halobacterium volcanii).